A 169-amino-acid polypeptide reads, in one-letter code: Benzoate 1,2-dioxygenase subunit beta (169 aa).

This sequence belongs to the bacterial ring-hydroxylating dioxygenase beta subunit family. This dioxygenase system consists of three proteins: the two subunits of the hydroxylase (BenA and BenB), and an electron transfer component (BenC).

The enzyme catalyses benzoate + NADH + O2 + H(+) = (1R,6S)-1,6-dihydroxycyclohexa-2,4-diene-1-carboxylate + NAD(+). The protein operates within aromatic compound metabolism; benzoate degradation via hydroxylation; catechol from benzoate: step 1/2. Functionally, degradation of benzoate to 2-hydro-1,2-dihydroxybenzoate (DHB). The beta subunit may be responsible for the substrate specificity of the enzyme. The polypeptide is Benzoate 1,2-dioxygenase subunit beta (benB) (Acinetobacter baylyi (strain ATCC 33305 / BD413 / ADP1)).